A 154-amino-acid chain; its full sequence is 3-hydroxyacyl-[acyl-carrier-protein] dehydratase FabZ (154 aa).

Residue histidine 54 is part of the active site.

The protein belongs to the thioester dehydratase family. FabZ subfamily.

It is found in the cytoplasm. It carries out the reaction a (3R)-hydroxyacyl-[ACP] = a (2E)-enoyl-[ACP] + H2O. Its function is as follows. Involved in unsaturated fatty acids biosynthesis. Catalyzes the dehydration of short chain beta-hydroxyacyl-ACPs and long chain saturated and unsaturated beta-hydroxyacyl-ACPs. The chain is 3-hydroxyacyl-[acyl-carrier-protein] dehydratase FabZ from Shewanella oneidensis (strain ATCC 700550 / JCM 31522 / CIP 106686 / LMG 19005 / NCIMB 14063 / MR-1).